Reading from the N-terminus, the 83-residue chain is Apolipoprotein C-I, basic form (83 aa).

An N-terminal signal peptide occupies residues 1–26; sequence MRLFLSLPVLVVVLSMVLEGPAPAQG.

Belongs to the apolipoprotein C1 family.

The protein localises to the secreted. Inhibitor of lipoprotein binding to the low density lipoprotein (LDL) receptor, LDL receptor-related protein, and very low density lipoprotein (VLDL) receptor. Associates with high density lipoproteins (HDL) and the triacylglycerol-rich lipoproteins in the plasma and makes up about 10% of the protein of the VLDL and 2% of that of HDL. Appears to interfere directly with fatty acid uptake and is also the major plasma inhibitor of cholesteryl ester transfer protein (CETP). Binds free fatty acids and reduces their intracellular esterification. Modulates the interaction of APOE with beta-migrating VLDL and inhibits binding of beta-VLDL to the LDL receptor-related protein. This chain is Apolipoprotein C-I, basic form (APOC1B), found in Cercocebus atys (Sooty mangabey).